We begin with the raw amino-acid sequence, 73 residues long: Translation initiation factor IF-1 (73 aa).

Positions 1 to 72 constitute an S1-like domain; sequence MAKEDAIEVE…NRGRITYRSK (72 aa).

The protein belongs to the IF-1 family. Component of the 30S ribosomal translation pre-initiation complex which assembles on the 30S ribosome in the order IF-2 and IF-3, IF-1 and N-formylmethionyl-tRNA(fMet); mRNA recruitment can occur at any time during PIC assembly.

It is found in the cytoplasm. Its function is as follows. One of the essential components for the initiation of protein synthesis. Stabilizes the binding of IF-2 and IF-3 on the 30S subunit to which N-formylmethionyl-tRNA(fMet) subsequently binds. Helps modulate mRNA selection, yielding the 30S pre-initiation complex (PIC). Upon addition of the 50S ribosomal subunit IF-1, IF-2 and IF-3 are released leaving the mature 70S translation initiation complex. This Syntrophobacter fumaroxidans (strain DSM 10017 / MPOB) protein is Translation initiation factor IF-1.